The chain runs to 277 residues: MVSAPPAEQLIEDAPLTIAGRQFRSRLMTGTGKYRSIADLQASVAASGCEIVTVAVRRVQTNAPGHEGLVDALDWSKLWLLPNTAGCQTAEEAIRVARLGREMAKLLGQEDNNFVKLEVIPDPKYLLPDPFGTLAAAEQLVKEGFAVLPYINADPLLAKRLEEVGCVTVMPLASPIGSGQGLRNAANIQIIIEQASVPVVVDAGIGTPSEAAAAMELGADALLINTAIAEAGNAPAMAKAMALATTAGRLAYLAGRIPVKAYASASSPLSGTITARS.

Lysine 116 serves as the catalytic Schiff-base intermediate with DXP. Residues glycine 177, 203-204, and 225-226 each bind 1-deoxy-D-xylulose 5-phosphate; these read AG and NT.

This sequence belongs to the ThiG family. As to quaternary structure, homotetramer. Forms heterodimers with either ThiH or ThiS.

It is found in the cytoplasm. The catalysed reaction is [ThiS sulfur-carrier protein]-C-terminal-Gly-aminoethanethioate + 2-iminoacetate + 1-deoxy-D-xylulose 5-phosphate = [ThiS sulfur-carrier protein]-C-terminal Gly-Gly + 2-[(2R,5Z)-2-carboxy-4-methylthiazol-5(2H)-ylidene]ethyl phosphate + 2 H2O + H(+). It functions in the pathway cofactor biosynthesis; thiamine diphosphate biosynthesis. In terms of biological role, catalyzes the rearrangement of 1-deoxy-D-xylulose 5-phosphate (DXP) to produce the thiazole phosphate moiety of thiamine. Sulfur is provided by the thiocarboxylate moiety of the carrier protein ThiS. In vitro, sulfur can be provided by H(2)S. This Thermosynechococcus vestitus (strain NIES-2133 / IAM M-273 / BP-1) protein is Thiazole synthase.